Here is a 953-residue protein sequence, read N- to C-terminus: MTPIAVTPVAPVDIIYDLKHTERATESSPVTLLDVFSRAVSQYPNHELSFITSSAHDSTIHTKTFAEFNQDVHALAQAMRAWGKPTGSVIVVYLTEHEDNMAAVWASLLAGYVPCLQPALSAQQAHKEGHVGHIKNLFSSATWLTNESGAEQVQSISGLDIHLLSELKASAEAGVDFQAHQPNSDDEAILFLTSGSTGFSKAVVHTHRTILAACHAKGESYGLTSESKIMNWVGFDHVAGSLEMHIAPLLYGASQLHVHASAILSDPLRFLHLIEEKSIQLAFAPNFLLAKLTRDLEKRSDLFGKFDLSSIKRINSGGEAVVSSTAQAFARTLKNLAKDGDASFVISAGFGMTETCAGCIYDPINVLETPPSYEFLELGTPVAGCEMRVVNPEDGVTPRPDGESGELQVRGPMVFVRYYNNPEATSSSFVEGGWYRTGDVGIVEQGKMRLSGRIKDTVIVHGVSYGIPELETYLQTVEGVTHSFLAAAPYRAPGQETEGFVVFYSPTFDLDSEDAPAKLFATHRALRDVSVKLITLPPQQIIPIPINQMEKTTLGKLSRARLVNLFKQGELAKHIDRAEELVSIARGASFVAPSTETEKTLAGIYAGIFNLSVGDMSASENFFELGGTSIDVIRLKREGESAFDLPEIPTIQILKHPVISSLAKYVDSLISKDASQEEYDPIVPLQLTGNKTPIFMVHPGVGEVLIFVNLAKYFQNERPFYALRARGFEPGHPFFTTMDEMVSSYAAAIKRTQAHGPYAIAGYSYGGVVAFEVAKRLEAMGDEVKFTGLINIPPHIADRMHEIDWTGGMLNLSYFLGLVSKQDANDLAPSMRPLTRKEQLEIVWKLSPPERLVELQLTPEKLDHWVDIAGSLIECGKTYEPASSVSVLDVFYAIPLRGSKEDWLNNQLKPWAGYSRAEPSYTDVPGQHYTLMDFDHVPGFQKIFRSRLEARGL.

Residues 38–460 (RAVSQYPNHE…SGRIKDTVIV (423 aa)) are adenylation (A) domain. One can recognise a Carrier domain in the interval 592-670 (APSTETEKTL…SLAKYVDSLI (79 aa)). The interval 597–667 (TEKTLAGIYA…VISSLAKYVD (71 aa)) is thiolation and peptide carrier (T) domain. An O-(pantetheine 4'-phosphoryl)serine modification is found at Ser-629. The interval 693 to 795 (PIFMVHPGVG…FTGLINIPPH (103 aa)) is thioesterase (TE) domain.

Belongs to the ATP-dependent AMP-binding enzyme family.

Its pathway is secondary metabolite biosynthesis. An L-tyrosine:2-oxoglutarate aminotransferase (probably invD) and atromentin synthetase invA2 catalyze consecutive steps to turn over L-tyrosine into atromentin, which represents the generic precursor molecule for the entire terphenylquinone and pulvinic acid family of pigments, which are widely distributed secondary metabolites in homobasidiomycetes. The first step catalyzed by the aminotransferase converts L-tyrosine in to 4-hydroxyphenylpyruvate (4-HPP). Adenylation of two 4-HPP monomers by the invA2 adenylation (A) domain, covalent tethering of the monomers as a thioester and oxoester onto the invA2 thiolation (T) and thioesterase (TE) domains, respectively, and symmetric C-C-bond formation between two monomers catalyzed by the invA2 TE domain leads to atromentin. The chain is Atromentin synthetase invA2 (invA2) from Paxillus involutus (Naked brimcap).